A 163-amino-acid polypeptide reads, in one-letter code: Protein LOL5 (163 aa).

Polar residues-rich tracts occupy residues methionine 1–serine 25 and leucine 33–histidine 44. The segment at methionine 1–aspartate 51 is disordered. 2 putative zinc finger regions span residues glutamine 70–valine 100 and lysine 108–isoleucine 138.

It is found in the nucleus. Involved in plant growth and disease resistance. In Oryza sativa subsp. japonica (Rice), this protein is Protein LOL5 (LOL5).